Consider the following 483-residue polypeptide: Glycogen synthase kinase-3 alpha (483 aa).

Gly residues predominate over residues 1-15 (MSGGGPSGGGPGGSG). Residues 1–96 (MSGGGPSGGG…PPPGVKLGRD (96 aa)) are disordered. Position 2 is an N-acetylserine (Ser2). Ser2 bears the Phosphoserine mark. Ser21 is modified (phosphoserine; by PKB/AKT1). Over residues 25-82 (PGGGGGGGGGGPGGSASGPGGTGGGKASVGAMGGGVGASSSGGGPGGSGGGGSGGPGA) the composition is skewed to gly residues. 3 positions are modified to phosphoserine: Ser72, Ser77, and Ser97. In terms of domain architecture, Protein kinase spans 119 to 403 (YTDIKVIGNG…PLEACAHSFF (285 aa)). ATP is bound by residues 125 to 133 (IGNGSFGVV) and Lys148. The active-site Proton acceptor is the Asp244. Phosphotyrosine is present on Tyr279. Residues 449 to 483 (AGTTTLTPSSQALTETPTSSDWQSTDATPTLTNSS) form a disordered region.

The protein belongs to the protein kinase superfamily. CMGC Ser/Thr protein kinase family. GSK-3 subfamily. Monomer. Interacts with ARRB2. Interacts with AXIN1 and CTNNB1/beta-catenin. Interacts with CTNND2. Interacts with LMBR1L. Interacts with DDX3X. Interacts with TNFRSF10B. Interacts with RICTOR; the interaction results in phosphorylation of RICTOR at 'Thr-1695' by GSK3A which facilitates FBXW7-mediated ubiquitination and subsequent degradation of RICTOR. In terms of assembly, (Microbial infection) Interacts with M.tuberculosis PtpA. Phosphorylated by AKT1 at Ser-21: upon insulin-mediated signaling, the activated PKB/AKT1 protein kinase phosphorylates and deactivates GSK3A, resulting in the dephosphorylation and activation of GYS1. Activated by phosphorylation at Tyr-279. In terms of processing, (Microbial infection) Dephosphorylated at Tyr-279 by M.tuberculosis PtpA, which leads to prevention of apoptosis during early stages of microbial infection.

It carries out the reaction L-seryl-[tau protein] + ATP = O-phospho-L-seryl-[tau protein] + ADP + H(+). The enzyme catalyses L-threonyl-[tau protein] + ATP = O-phospho-L-threonyl-[tau protein] + ADP + H(+). The catalysed reaction is L-seryl-[protein] + ATP = O-phospho-L-seryl-[protein] + ADP + H(+). It catalyses the reaction L-threonyl-[protein] + ATP = O-phospho-L-threonyl-[protein] + ADP + H(+). With respect to regulation, activated by phosphorylation at Tyr-279. In response to insulin, inhibited by phosphorylation at Ser-21 by PKB/AKT1; phosphorylation at this site causes a conformational change, preventing access of substrates to the active site. Inhibited by lithium. Its function is as follows. Constitutively active protein kinase that acts as a negative regulator in the hormonal control of glucose homeostasis, Wnt signaling and regulation of transcription factors and microtubules, by phosphorylating and inactivating glycogen synthase (GYS1 or GYS2), CTNNB1/beta-catenin, APC and AXIN1. Requires primed phosphorylation of the majority of its substrates. Contributes to insulin regulation of glycogen synthesis by phosphorylating and inhibiting GYS1 activity and hence glycogen synthesis. Regulates glycogen metabolism in liver, but not in muscle. May also mediate the development of insulin resistance by regulating activation of transcription factors. In Wnt signaling, regulates the level and transcriptional activity of nuclear CTNNB1/beta-catenin. Facilitates amyloid precursor protein (APP) processing and the generation of APP-derived amyloid plaques found in Alzheimer disease. May be involved in the regulation of replication in pancreatic beta-cells. Is necessary for the establishment of neuronal polarity and axon outgrowth. Through phosphorylation of the anti-apoptotic protein MCL1, may control cell apoptosis in response to growth factors deprivation. Acts as a regulator of autophagy by mediating phosphorylation of KAT5/TIP60 under starvation conditions which activates KAT5/TIP60 acetyltransferase activity and promotes acetylation of key autophagy regulators, such as ULK1 and RUBCNL/Pacer. Negatively regulates extrinsic apoptotic signaling pathway via death domain receptors. Promotes the formation of an anti-apoptotic complex, made of DDX3X, BRIC2 and GSK3B, at death receptors, including TNFRSF10B. The anti-apoptotic function is most effective with weak apoptotic signals and can be overcome by stronger stimulation. Phosphorylates mTORC2 complex component RICTOR at 'Thr-1695' which facilitates FBXW7-mediated ubiquitination and subsequent degradation of RICTOR. The protein is Glycogen synthase kinase-3 alpha (GSK3A) of Homo sapiens (Human).